Reading from the N-terminus, the 404-residue chain is RNA exonuclease 3 (404 aa).

Residues 1–17 (MNNNAQNKRSLDDSNGN) show a composition bias toward polar residues. Residues 1–29 (MNNNAQNKRSLDDSNGNDTKRPKQEDPKY) are disordered. The span at 18–28 (DTKRPKQEDPK) shows a compositional bias: basic and acidic residues. Positions 241 to 389 (VLGIDCEMGF…EDSIAAIDIV (149 aa)) constitute an Exonuclease domain.

This sequence belongs to the REXO1/REXO3 family.

The protein localises to the cytoplasm. The protein resides in the nucleus. In terms of biological role, 3' to 5' exoribonuclease required for proper 3' end maturation of MRP RNA and of the U5L snRNA. This chain is RNA exonuclease 3 (REX3), found in Candida albicans (strain SC5314 / ATCC MYA-2876) (Yeast).